Here is a 192-residue protein sequence, read N- to C-terminus: Leucine-rich repeat-containing protein 51 (192 aa).

3 LRR repeats span residues 49–71 (SLTQ…NQVV), 80–101 (NLAW…LTTF), and 103–124 (NLSV…NKLA). In terms of domain architecture, LRRCT spans 137 to 175 (NPIEEEKGYRQYVLCNLPRITTFDFSGVTRADRSTAEVW).

Widely expressed in adult and embryonic tissues. Expressed in the developing choroid plexus from 12.5 dpc and in the epithelium of the developing airway tract from 14.5 dpc. Also expressed in the postnatal inner ear.

The protein resides in the cytoplasm. The chain is Leucine-rich repeat-containing protein 51 from Mus musculus (Mouse).